Here is an 852-residue protein sequence, read N- to C-terminus: DNA repair protein rhp54 (852 aa).

2 short sequence motifs (nuclear localization signal) span residues 35–51 (KKFK…RKEL) and 178–181 (KRKK). Residues 187 to 205 (NRKGKKEISDSEPESDHDS) show a composition bias toward basic and acidic residues. Residues 187-208 (NRKGKKEISDSEPESDHDSCVS) form a disordered region. The 179-residue stretch at 281–459 (GRIDRCANGC…FSLLNFANPG (179 aa)) folds into the Helicase ATP-binding domain. 294-301 (DEMGLGKT) lines the ATP pocket. The DEGH box signature appears at 410–413 (DEGH). A Helicase C-terminal domain is found at 614–767 (VLERMLYQIK…CVVDEAQDVE (154 aa)).

The protein belongs to the SNF2/RAD54 helicase family. As to quaternary structure, homohexamer. Interacts with rhp51.

Its subcellular location is the nucleus. It catalyses the reaction ATP + H2O = ADP + phosphate + H(+). Functionally, plays an essential role in homologous recombination (HR) which is a major pathway for repairing DNA double-strand breaks (DSBs), single-stranded DNA (ssDNA) gaps, and stalled or collapsed replication forks. Acts as a molecular motor during the homology search and guides RAD51 ssDNA along a donor dsDNA thereby changing the homology search from the diffusion-based mechanism to a motor-guided mechanism. Plays also an essential role in RAD51-mediated synaptic complex formation which consists of three strands encased in a protein filament formed once homology is recognized. Once DNA strand exchange occured, dissociates RAD51 from nucleoprotein filaments formed on dsDNA. In Schizosaccharomyces pombe (strain 972 / ATCC 24843) (Fission yeast), this protein is DNA repair protein rhp54 (rhp54).